Consider the following 221-residue polypeptide: ATP phosphoribosyltransferase (221 aa).

This sequence belongs to the ATP phosphoribosyltransferase family. Short subfamily. Heteromultimer composed of HisG and HisZ subunits.

Its subcellular location is the cytoplasm. The catalysed reaction is 1-(5-phospho-beta-D-ribosyl)-ATP + diphosphate = 5-phospho-alpha-D-ribose 1-diphosphate + ATP. It participates in amino-acid biosynthesis; L-histidine biosynthesis; L-histidine from 5-phospho-alpha-D-ribose 1-diphosphate: step 1/9. In terms of biological role, catalyzes the condensation of ATP and 5-phosphoribose 1-diphosphate to form N'-(5'-phosphoribosyl)-ATP (PR-ATP). Has a crucial role in the pathway because the rate of histidine biosynthesis seems to be controlled primarily by regulation of HisG enzymatic activity. The sequence is that of ATP phosphoribosyltransferase from Anaeromyxobacter sp. (strain K).